Consider the following 359-residue polypeptide: GDSL esterase/lipase At2g30310 (359 aa).

The signal sequence occupies residues 1 to 28; it reads MSTSKTIVFGLFVATLLVSCNVAANATT. Ser41 serves as the catalytic Nucleophile. Residues Asn103 and Asn325 are each glycosylated (N-linked (GlcNAc...) asparagine). Catalysis depends on residues Asp333 and His336.

Belongs to the 'GDSL' lipolytic enzyme family.

The protein localises to the secreted. This chain is GDSL esterase/lipase At2g30310, found in Arabidopsis thaliana (Mouse-ear cress).